The chain runs to 60 residues: Large ribosomal subunit protein bL32 (60 aa).

Residues 1-25 (MAVQQNKKSPSKRGMHRSHNALNVP) form a disordered region. Basic residues predominate over residues 9-19 (SPSKRGMHRSH).

This sequence belongs to the bacterial ribosomal protein bL32 family.

In Polaromonas naphthalenivorans (strain CJ2), this protein is Large ribosomal subunit protein bL32.